Reading from the N-terminus, the 341-residue chain is Homeobox protein knotted-1-like 8 (341 aa).

Residues 1 to 17 (MESFASLAGGGSSSTTA) show a composition bias toward low complexity. Disordered regions lie at residues 1–72 (MESF…AVQG), 121–148 (AAQQLDEADGHPRRRHEPQRDDDPDQLD), and 187–207 (AESNCEGTGSSEEEQDPSDKQ). The segment covering 187-196 (AESNCEGTGS) has biased composition (polar residues). Positions 207 to 227 (QLKHQLLRKYGGSLGDLRQVF) constitute an ELK domain. Residues 228–291 (SKRTKKGKLP…NQRKRHWKPT (64 aa)) constitute a DNA-binding region (homeobox; TALE-type).

The protein belongs to the TALE/KNOX homeobox family.

It is found in the nucleus. Probable transcription factor that may be involved in shoot formation during embryogenesis. The chain is Homeobox protein knotted-1-like 8 (OSH43) from Oryza sativa subsp. japonica (Rice).